A 406-amino-acid chain; its full sequence is MKLSTLFTLATTISTLTTFTIASPVVVVEKRAINETALAEDIPTTKNNHAQTSYGKPFAIYQPKAFIISMFSLERDPWLKAMDFVHNITIPGLSPVYPDIHCTTNYTICQITTGEGEINAASSISALTLNPLFDLTKTYFLVGGIAGGEPNYTTIGGVTFAKYAVQVGLEYQLAYEDYHKTNPDWISGYIPYGTDDQNTYPGNVYGTEVFEVNEKLRDRAVELASKVHLNNGTEGNAKFRKLYNETAAQGLPKVVKCDSLTSDNYFTGNVLNDYFANFTLLMTNGSATYCSTAQEDNATLEVMTRLAKHGLVDYDRIMIMRTISDFSRPPPSMSAYEYFFNRSDGGISASLENLVIAGTPIIHDIVQNWDKIYESGEKYSSKNYVGDIFATLGGKPDFGKESFDTA.

A signal peptide spans 1–22 (MKLSTLFTLATTISTLTTFTIA).

Belongs to the NUP family. Predicted to be a substrate for cleavage by KEX2.

Mammalian nucleoside transport inhibitors dipyridamole and NBMPR inhibit adenosine transport by NUP. In terms of biological role, nucleoside permease that transports adenosine and guanosine. Does not show any transport activities towards cytidine, adenine, guanine, uridine, and uracil. In Candida albicans (strain SC5314 / ATCC MYA-2876) (Yeast), this protein is Purine nucleoside permease.